A 247-amino-acid polypeptide reads, in one-letter code: Transcription factor bHLH92 (247 aa).

The bHLH domain maps to 85–134 (ERSRRHMLKERTRREKQKQSYLALHSLLPFATKNDKNSIVEKAVDEIAKL).

As to quaternary structure, homodimer.

The protein resides in the nucleus. The sequence is that of Transcription factor bHLH92 (BHLH92) from Arabidopsis thaliana (Mouse-ear cress).